The sequence spans 603 residues: Elongation factor 4 (603 aa).

Residues 7–189 form the tr-type G domain; sequence SRLRNFCIIA…AVVDRIPSPK (183 aa). GTP-binding positions include 19–24 and 136–139; these read DHGKST and NKVD.

Belongs to the TRAFAC class translation factor GTPase superfamily. Classic translation factor GTPase family. LepA subfamily.

It is found in the cell inner membrane. The enzyme catalyses GTP + H2O = GDP + phosphate + H(+). Required for accurate and efficient protein synthesis under certain stress conditions. May act as a fidelity factor of the translation reaction, by catalyzing a one-codon backward translocation of tRNAs on improperly translocated ribosomes. Back-translocation proceeds from a post-translocation (POST) complex to a pre-translocation (PRE) complex, thus giving elongation factor G a second chance to translocate the tRNAs correctly. Binds to ribosomes in a GTP-dependent manner. This Prochlorococcus marinus (strain NATL2A) protein is Elongation factor 4.